The sequence spans 875 residues: DNA gyrase subunit A (875 aa).

The Topo IIA-type catalytic domain occupies 34–533; sequence LPDVRDGLKP…NSADINLEDL (500 aa). Tyrosine 122 acts as the O-(5'-phospho-DNA)-tyrosine intermediate in catalysis. Residues 560-566 carry the GyrA-box motif; sequence QRRGGKG. The tract at residues 841–875 is disordered; the sequence is EPVDEEDLDTIDGSAAEGDDEIAPEVDVDDEPEEE. The span at 857–875 shows a compositional bias: acidic residues; that stretch reads EGDDEIAPEVDVDDEPEEE.

This sequence belongs to the type II topoisomerase GyrA/ParC subunit family. Heterotetramer, composed of two GyrA and two GyrB chains. In the heterotetramer, GyrA contains the active site tyrosine that forms a transient covalent intermediate with DNA, while GyrB binds cofactors and catalyzes ATP hydrolysis.

The protein resides in the cytoplasm. The catalysed reaction is ATP-dependent breakage, passage and rejoining of double-stranded DNA.. In terms of biological role, a type II topoisomerase that negatively supercoils closed circular double-stranded (ds) DNA in an ATP-dependent manner to modulate DNA topology and maintain chromosomes in an underwound state. Negative supercoiling favors strand separation, and DNA replication, transcription, recombination and repair, all of which involve strand separation. Also able to catalyze the interconversion of other topological isomers of dsDNA rings, including catenanes and knotted rings. Type II topoisomerases break and join 2 DNA strands simultaneously in an ATP-dependent manner. This Shigella flexneri protein is DNA gyrase subunit A.